Consider the following 417-residue polypeptide: NADH-quinone oxidoreductase subunit D (417 aa).

The protein belongs to the complex I 49 kDa subunit family. As to quaternary structure, NDH-1 is composed of 14 different subunits. Subunits NuoB, C, D, E, F, and G constitute the peripheral sector of the complex.

The protein localises to the cell inner membrane. The catalysed reaction is a quinone + NADH + 5 H(+)(in) = a quinol + NAD(+) + 4 H(+)(out). In terms of biological role, NDH-1 shuttles electrons from NADH, via FMN and iron-sulfur (Fe-S) centers, to quinones in the respiratory chain. The immediate electron acceptor for the enzyme in this species is believed to be ubiquinone. Couples the redox reaction to proton translocation (for every two electrons transferred, four hydrogen ions are translocated across the cytoplasmic membrane), and thus conserves the redox energy in a proton gradient. The sequence is that of NADH-quinone oxidoreductase subunit D from Cupriavidus metallidurans (strain ATCC 43123 / DSM 2839 / NBRC 102507 / CH34) (Ralstonia metallidurans).